The chain runs to 274 residues: Ribosomal RNA small subunit methyltransferase A (274 aa).

S-adenosyl-L-methionine is bound by residues H15, L17, G42, E64, D89, and N109.

Belongs to the class I-like SAM-binding methyltransferase superfamily. rRNA adenine N(6)-methyltransferase family. RsmA subfamily.

The protein resides in the cytoplasm. It carries out the reaction adenosine(1518)/adenosine(1519) in 16S rRNA + 4 S-adenosyl-L-methionine = N(6)-dimethyladenosine(1518)/N(6)-dimethyladenosine(1519) in 16S rRNA + 4 S-adenosyl-L-homocysteine + 4 H(+). Its function is as follows. Specifically dimethylates two adjacent adenosines (A1518 and A1519) in the loop of a conserved hairpin near the 3'-end of 16S rRNA in the 30S particle. May play a critical role in biogenesis of 30S subunits. This Synechococcus sp. (strain CC9902) protein is Ribosomal RNA small subunit methyltransferase A.